The chain runs to 138 residues: ATP synthase epsilon chain (138 aa).

It belongs to the ATPase epsilon chain family. F-type ATPases have 2 components, CF(1) - the catalytic core - and CF(0) - the membrane proton channel. CF(1) has five subunits: alpha(3), beta(3), gamma(1), delta(1), epsilon(1). CF(0) has three main subunits: a, b and c.

The protein localises to the cell inner membrane. Its function is as follows. Produces ATP from ADP in the presence of a proton gradient across the membrane. This chain is ATP synthase epsilon chain, found in Bartonella quintana (strain Toulouse) (Rochalimaea quintana).